Here is a 147-residue protein sequence, read N- to C-terminus: Urease accessory protein UreE (147 aa).

Belongs to the UreE family.

It is found in the cytoplasm. Its function is as follows. Involved in urease metallocenter assembly. Binds nickel. Probably functions as a nickel donor during metallocenter assembly. The polypeptide is Urease accessory protein UreE (Nostoc sp. (strain PCC 7120 / SAG 25.82 / UTEX 2576)).